Here is a 212-residue protein sequence, read N- to C-terminus: MQYDLYVVTDEGLSRGLTHPELARRAIAGSADVIQLRDKKCDCDYLLRCAMEMREDCNKAGVTFIVNDRLDVALQSQADGVHIGQSDMPLKFARRVAPKGFIIGVSAGTVEEALRAEHDGADYIGFGPVFPTGSKADAGPVCGLDLLREVRRRVSIPVVAIGGINAANAPEVLAAGADGLAVISAVVSQEDVTAAARNLKAIISQYRLSGRQ.

4-amino-2-methyl-5-(diphosphooxymethyl)pyrimidine contacts are provided by residues 35–39 (QLRDK) and N67. Residues D68 and D87 each contribute to the Mg(2+) site. S106 contacts 4-amino-2-methyl-5-(diphosphooxymethyl)pyrimidine. 132–134 (TGS) lines the 2-[(2R,5Z)-2-carboxy-4-methylthiazol-5(2H)-ylidene]ethyl phosphate pocket. K135 lines the 4-amino-2-methyl-5-(diphosphooxymethyl)pyrimidine pocket. Residues G163 and 183-184 (IS) each bind 2-[(2R,5Z)-2-carboxy-4-methylthiazol-5(2H)-ylidene]ethyl phosphate.

Belongs to the thiamine-phosphate synthase family. Mg(2+) is required as a cofactor.

The enzyme catalyses 2-[(2R,5Z)-2-carboxy-4-methylthiazol-5(2H)-ylidene]ethyl phosphate + 4-amino-2-methyl-5-(diphosphooxymethyl)pyrimidine + 2 H(+) = thiamine phosphate + CO2 + diphosphate. The catalysed reaction is 2-(2-carboxy-4-methylthiazol-5-yl)ethyl phosphate + 4-amino-2-methyl-5-(diphosphooxymethyl)pyrimidine + 2 H(+) = thiamine phosphate + CO2 + diphosphate. It catalyses the reaction 4-methyl-5-(2-phosphooxyethyl)-thiazole + 4-amino-2-methyl-5-(diphosphooxymethyl)pyrimidine + H(+) = thiamine phosphate + diphosphate. It functions in the pathway cofactor biosynthesis; thiamine diphosphate biosynthesis; thiamine phosphate from 4-amino-2-methyl-5-diphosphomethylpyrimidine and 4-methyl-5-(2-phosphoethyl)-thiazole: step 1/1. Condenses 4-methyl-5-(beta-hydroxyethyl)thiazole monophosphate (THZ-P) and 2-methyl-4-amino-5-hydroxymethyl pyrimidine pyrophosphate (HMP-PP) to form thiamine monophosphate (TMP). The protein is Thiamine-phosphate synthase of Methanocella arvoryzae (strain DSM 22066 / NBRC 105507 / MRE50).